The following is a 506-amino-acid chain: Pisatin demethylase (506 aa).

Heme is bound at residue Cys-453.

This sequence belongs to the cytochrome P450 family. Requires heme as cofactor.

Functionally, can detoxify the phytoalexin pisatin from garden pea. Pisatin is an antimicrobial compound produced by pea in response to infection by plant pathogens. This is Pisatin demethylase (PDA6-1) from Fusarium vanettenii (Neocosmospora pisi).